We begin with the raw amino-acid sequence, 320 residues long: 7-acetyl-epi-neemfruitin B aldo-keto reductase (320 aa).

NADP(+) is bound at residue D51. The Proton donor role is filled by Y56. NADP(+) is bound by residues Q186 and 264–272 (FNKQRMEEN).

It belongs to the aldo/keto reductase family. Mainly expressed in petioles and, to a lower extent, in roots.

The enzyme catalyses 7-acetyl-epi-neemfruitin B + AH2 + H2O = (1S,3bR,4R,5aR,9aR,9bR,11aS)-1-[(4R)-5-[(2S)-3,3-dimethyloxiran-2-yl]-1,4-dihydroxybutan-2-yl]-3b,6,6,9a,11a-pentamethyl-7-oxo-1H,2H,3bH,4H,5H,5aH,6H,7H,9aH,9bH,10H,11H,11aH-cyclopenta[a]phenanthren-4-yl acetate + acetate + A + H(+). It functions in the pathway secondary metabolite biosynthesis; terpenoid biosynthesis. Aldo-keto reductase involved in the biosynthesis of limonoids triterpene natural products such as azadirachtin, an antifeedant widely used as bioinsecticide, and possessing many medicinal applications including anti-tumoral, anti-malarial, anti-rheumatic, antibacterial, anti-inflammatory, anti-pyretic and diuretic effects. Can use 7-acetyl-epi-neemfruitin B as substrate. In Melia azedarach (Chinaberry tree), this protein is 7-acetyl-epi-neemfruitin B aldo-keto reductase.